The chain runs to 76 residues: uncharacterized protein (76 aa).

This is an uncharacterized protein from Escherichia coli (strain K12).